Here is a 616-residue protein sequence, read N- to C-terminus: Chaperone protein HscA (616 aa).

It belongs to the heat shock protein 70 family.

Its function is as follows. Chaperone involved in the maturation of iron-sulfur cluster-containing proteins. Has a low intrinsic ATPase activity which is markedly stimulated by HscB. Involved in the maturation of IscU. This Pectobacterium carotovorum subsp. carotovorum (strain PC1) protein is Chaperone protein HscA.